The following is a 95-amino-acid chain: Hge-scorpine (95 aa).

The N-terminal stretch at 1–19 (MNTKLTVLCFLGIVTIVSC) is a signal peptide. Positions 55–94 (QFGCFANVDVKGDCKRHCKAEDKEGICHGTKCKCGVPISY) constitute a BetaSPN-type CS-alpha/beta domain. 3 disulfides stabilise this stretch: C58–C81, C68–C86, and C72–C88.

Belongs to the long chain scorpion toxin family. Class 3 subfamily. In terms of tissue distribution, expressed by the venom gland.

The protein localises to the secreted. Its function is as follows. Has antibacterial activity against B.subtilis, but not against S.aureus. Also has hemolytic and cytolytic activities. Since cell lysis occurs at the tested concentrations, observation of activity on potassium channels is impossible. Functionally, blocks Kv1.1/KCNA1 (IC(50)=185 nM) potassium channels. Shows a weak hemolytic activity. The polypeptide is Hge-scorpine (Hoffmannihadrurus gertschi (Scorpion)).